Here is a 207-residue protein sequence, read N- to C-terminus: Superoxide dismutase [Mn] (207 aa).

Histidine 27, histidine 82, aspartate 169, and histidine 173 together coordinate Mn(2+).

This sequence belongs to the iron/manganese superoxide dismutase family. Mn(2+) is required as a cofactor.

The enzyme catalyses 2 superoxide + 2 H(+) = H2O2 + O2. Functionally, destroys superoxide anion radicals which are normally produced within the cells and which are toxic to biological systems. This Yersinia enterocolitica protein is Superoxide dismutase [Mn] (sodA).